A 64-amino-acid polypeptide reads, in one-letter code: uncharacterized protein (64 aa).

The protein resides in the mitochondrion. This is an uncharacterized protein from Marchantia polymorpha (Common liverwort).